Consider the following 299-residue polypeptide: tRNA uridine(34) hydroxylase (299 aa).

In terms of domain architecture, Rhodanese spans 132–226 (ASRPVVMLDT…YFEEVGGAHY (95 aa)). Residue cysteine 186 is the Cysteine persulfide intermediate of the active site.

This sequence belongs to the TrhO family.

The enzyme catalyses uridine(34) in tRNA + AH2 + O2 = 5-hydroxyuridine(34) in tRNA + A + H2O. In terms of biological role, catalyzes oxygen-dependent 5-hydroxyuridine (ho5U) modification at position 34 in tRNAs. The protein is tRNA uridine(34) hydroxylase of Burkholderia pseudomallei (strain K96243).